The primary structure comprises 280 residues: 2-dehydro-3-deoxyphosphooctonate aldolase (280 aa).

Belongs to the KdsA family.

It is found in the cytoplasm. It carries out the reaction D-arabinose 5-phosphate + phosphoenolpyruvate + H2O = 3-deoxy-alpha-D-manno-2-octulosonate-8-phosphate + phosphate. It functions in the pathway carbohydrate biosynthesis; 3-deoxy-D-manno-octulosonate biosynthesis; 3-deoxy-D-manno-octulosonate from D-ribulose 5-phosphate: step 2/3. It participates in bacterial outer membrane biogenesis; lipopolysaccharide biosynthesis. The chain is 2-dehydro-3-deoxyphosphooctonate aldolase from Neisseria gonorrhoeae (strain NCCP11945).